Here is a 66-residue protein sequence, read N- to C-terminus: uncharacterized protein (66 aa).

The signal sequence occupies residues 1–19 (MRRLYRHLASFFLLPSCPG).

This is an uncharacterized protein from Saccharomyces cerevisiae (strain ATCC 204508 / S288c) (Baker's yeast).